The primary structure comprises 375 residues: cAMP-dependent protein kinase regulatory subunit (375 aa).

The interval 28 to 142 is dimerization and phosphorylation; the sequence is RFCADYFNER…SLYKSVSHNF (115 aa). Residues 41–50 show a composition bias toward basic and acidic residues; that stretch reads REEADDDGPR. Residues 41 to 102 are disordered; it reads REEADDDGPR…EPAAPFTRRT (62 aa). Polar residues predominate over residues 64–82; that stretch reads GSSSRSTDGSLFRSSFADT. Residues 83–97 are compositionally biased toward low complexity; the sequence is SSEGPGSASSEPAAP. S103 is modified (phosphoserine). 3',5'-cyclic AMP is bound by residues 143-258, E208, R217, 261-375, E328, and R337; these read LFGN…FLKE and ILSD…DPTK.

This sequence belongs to the cAMP-dependent kinase regulatory chain family. Tetramer, composed of 2 regulatory (R) and 2 catalytic (C) subunits. In the presence of cAMP it dissociates into 2 active monomeric C subunits and an R dimer.

The protein is cAMP-dependent protein kinase regulatory subunit (PKAR) of Yarrowia lipolytica (strain CLIB 122 / E 150) (Yeast).